A 281-amino-acid chain; its full sequence is 2-dehydro-3-deoxyphosphooctonate aldolase (281 aa).

It belongs to the KdsA family.

It localises to the cytoplasm. The enzyme catalyses D-arabinose 5-phosphate + phosphoenolpyruvate + H2O = 3-deoxy-alpha-D-manno-2-octulosonate-8-phosphate + phosphate. Its pathway is carbohydrate biosynthesis; 3-deoxy-D-manno-octulosonate biosynthesis; 3-deoxy-D-manno-octulosonate from D-ribulose 5-phosphate: step 2/3. It functions in the pathway bacterial outer membrane biogenesis; lipopolysaccharide biosynthesis. The chain is 2-dehydro-3-deoxyphosphooctonate aldolase from Hahella chejuensis (strain KCTC 2396).